The following is a 156-amino-acid chain: 6,7-dimethyl-8-ribityllumazine synthase (156 aa).

Residues Phe23, 57-59, and 81-83 each bind 5-amino-6-(D-ribitylamino)uracil; these read AFE and AVI. 86–87 is a binding site for (2S)-2-hydroxy-3-oxobutyl phosphate; it reads AT. The active-site Proton donor is His89. Asn114 serves as a coordination point for 5-amino-6-(D-ribitylamino)uracil. Position 128 (Arg128) interacts with (2S)-2-hydroxy-3-oxobutyl phosphate.

It belongs to the DMRL synthase family.

The enzyme catalyses (2S)-2-hydroxy-3-oxobutyl phosphate + 5-amino-6-(D-ribitylamino)uracil = 6,7-dimethyl-8-(1-D-ribityl)lumazine + phosphate + 2 H2O + H(+). Its pathway is cofactor biosynthesis; riboflavin biosynthesis; riboflavin from 2-hydroxy-3-oxobutyl phosphate and 5-amino-6-(D-ribitylamino)uracil: step 1/2. Functionally, catalyzes the formation of 6,7-dimethyl-8-ribityllumazine by condensation of 5-amino-6-(D-ribitylamino)uracil with 3,4-dihydroxy-2-butanone 4-phosphate. This is the penultimate step in the biosynthesis of riboflavin. The polypeptide is 6,7-dimethyl-8-ribityllumazine synthase (Aliarcobacter butzleri (strain RM4018) (Arcobacter butzleri)).